The chain runs to 419 residues: DNA primase DnaG (419 aa).

One can recognise a Toprim domain in the interval 168 to 244 (DTIIVVEGRS…KVDYVARAPE (77 aa)). Residues E174, D218, and D220 each coordinate Mg(2+). Composition is skewed to basic and acidic residues over residues 280-291 (KPAEEAVKREEE) and 306-316 (KAAKPPEEKPP). The segment at 280 to 317 (KPAEEAVKREEEAAAEAKPPAPAVQEKAAKPPEEKPPT) is disordered.

It belongs to the archaeal DnaG primase family. In terms of assembly, forms a ternary complex with MCM helicase and DNA. Component of the archaeal exosome complex. It depends on Mg(2+) as a cofactor.

It catalyses the reaction ssDNA + n NTP = ssDNA/pppN(pN)n-1 hybrid + (n-1) diphosphate.. In terms of biological role, RNA polymerase that catalyzes the synthesis of short RNA molecules used as primers for DNA polymerase during DNA replication. Also part of the exosome, which is a complex involved in RNA degradation. Acts as a poly(A)-binding protein that enhances the interaction between heteromeric, adenine-rich transcripts and the exosome. This chain is DNA primase DnaG, found in Aeropyrum pernix (strain ATCC 700893 / DSM 11879 / JCM 9820 / NBRC 100138 / K1).